Here is a 195-residue protein sequence, read N- to C-terminus: Large ribosomal subunit protein uL5 (195 aa).

The protein belongs to the universal ribosomal protein uL5 family. Part of the 50S ribosomal subunit; part of the 5S rRNA/L5/L18/L25 subcomplex. Contacts the 5S rRNA and the P site tRNA. Forms a bridge to the 30S subunit in the 70S ribosome.

In terms of biological role, this is one of the proteins that bind and probably mediate the attachment of the 5S RNA into the large ribosomal subunit, where it forms part of the central protuberance. In the 70S ribosome it contacts protein S13 of the 30S subunit (bridge B1b), connecting the 2 subunits; this bridge is implicated in subunit movement. Contacts the P site tRNA; the 5S rRNA and some of its associated proteins might help stabilize positioning of ribosome-bound tRNAs. The protein is Large ribosomal subunit protein uL5 of Chlorobium chlorochromatii (strain CaD3).